The chain runs to 386 residues: 5-hydroxytryptamine receptor 1B (386 aa).

A disordered region spans residues 1 to 25 (MEEPGARCAPPPPAGSQTQTPSSNL). Residues 1–42 (MEEPGARCAPPPPAGSQTQTPSSNLSHNCSADSYIYQDSIAL) are Extracellular-facing. A compositionally biased stretch (polar residues) spans 16-25 (SQTQTPSSNL). N-linked (GlcNAc...) asparagine glycans are attached at residues N24 and N28. A helical membrane pass occupies residues 43–68 (PWKVLLVALLALITLATTLSNAFVIA). Residues 69–82 (TVYRTRKLHTPANY) are Cytoplasmic-facing. Residues 83–107 (LIASLAVTDLLVSILVMPISTMYTV) form a helical membrane-spanning segment. The Extracellular segment spans residues 108–115 (TGRWTLGQ). Residues 116 to 141 (VVCDFWLSSDITCCTASIMHLCVIAL) traverse the membrane as a helical segment. The cysteines at positions 118 and 195 are disulfide-linked. Positions 125 and 130 each coordinate ergotamine. The short motif at 142 to 144 (DRY) is the DRY motif; important for ligand-induced conformation changes and signaling element. The Cytoplasmic portion of the chain corresponds to 142–161 (DRYWAITDAVEYSAKRTPRR). The chain crosses the membrane as a helical span at residues 162–180 (AAVMIALVWVFSISISLPR). At 181-201 (FFWRQAKAEEEVLDCLVNTDH) the chain is on the extracellular side. Position 197 (V197) interacts with ergotamine. Residues 202–225 (VLYTVYSTVGAFYLPTLLLIALYG) traverse the membrane as a helical segment. Over 226-311 (RIYVEARSRI…AARERKATKT (86 aa)) the chain is Cytoplasmic. The interval 253 to 272 (ISDSPGSTSSVTSINSRVPD) is disordered. Residues 254-268 (SDSPGSTSSVTSINS) show a composition bias toward low complexity. The chain crosses the membrane as a helical span at residues 312-333 (LGIILGAFIVCWLPFFIISLVM). Residues 334–343 (PICKDACWFH) lie on the Extracellular side of the membrane. Residues 344–366 (MAIFDFFNWLGYLNSLINPIIYT) form a helical membrane-spanning segment. Residues 361 to 365 (NPIIY) carry the NPxxY motif; important for ligand-induced conformation changes and signaling motif. Over 367 to 386 (MPNEDFKQAFHKLIRFKCTG) the chain is Cytoplasmic. C384 is lipidated: S-palmitoyl cysteine.

Belongs to the G-protein coupled receptor 1 family. As to quaternary structure, homodimer. Heterodimer with HTR1D. In terms of processing, phosphorylated. Desensitization of the receptor may be mediated by its phosphorylation. Post-translationally, palmitoylated.

It is found in the cell membrane. Functionally, G-protein coupled receptor for 5-hydroxytryptamine (serotonin). Also functions as a receptor for ergot alkaloid derivatives, various anxiolytic and antidepressant drugs and other psychoactive substances, such as lysergic acid diethylamide (LSD). Ligand binding causes a conformation change that triggers signaling via guanine nucleotide-binding proteins (G proteins) and modulates the activity of downstream effectors, such as adenylate cyclase. HTR1B is coupled to G(i)/G(o) G alpha proteins and mediates inhibitory neurotransmission by inhibiting adenylate cyclase activity. Arrestin family members inhibit signaling via G proteins and mediate activation of alternative signaling pathways. Regulates the release of 5-hydroxytryptamine, dopamine and acetylcholine in the brain, and thereby affects neural activity, nociceptive processing, pain perception, mood and behavior. Besides, plays a role in vasoconstriction of cerebral arteries. This is 5-hydroxytryptamine receptor 1B (HTR1B) from Spalax ehrenbergi (Middle East blind mole rat).